Reading from the N-terminus, the 165-residue chain is SsrA-binding protein (165 aa).

The span at 135 to 158 (QAHDKRQDMARRDAQREVTRELGR) shows a compositional bias: basic and acidic residues. A disordered region spans residues 135–165 (QAHDKRQDMARRDAQREVTRELGRRVKGMTS).

It belongs to the SmpB family.

It is found in the cytoplasm. Required for rescue of stalled ribosomes mediated by trans-translation. Binds to transfer-messenger RNA (tmRNA), required for stable association of tmRNA with ribosomes. tmRNA and SmpB together mimic tRNA shape, replacing the anticodon stem-loop with SmpB. tmRNA is encoded by the ssrA gene; the 2 termini fold to resemble tRNA(Ala) and it encodes a 'tag peptide', a short internal open reading frame. During trans-translation Ala-aminoacylated tmRNA acts like a tRNA, entering the A-site of stalled ribosomes, displacing the stalled mRNA. The ribosome then switches to translate the ORF on the tmRNA; the nascent peptide is terminated with the 'tag peptide' encoded by the tmRNA and targeted for degradation. The ribosome is freed to recommence translation, which seems to be the essential function of trans-translation. The chain is SsrA-binding protein from Mycolicibacterium vanbaalenii (strain DSM 7251 / JCM 13017 / BCRC 16820 / KCTC 9966 / NRRL B-24157 / PYR-1) (Mycobacterium vanbaalenii).